A 241-amino-acid polypeptide reads, in one-letter code: MKQVDLLYTGKAKSVYRTDDPEVYIMKFRDDITAFDGEKKDTLEGKGRYNAEVSTFIFRYLEEHGIRTHYLASIESGVIAVRNLTMIPLEVIVRNVAAGSIVRNYPFREGEPLDPPLIVIDYKSDAHHDPMLNDELIYALGLATPEELDQIKAMALAINELLSDYLDLRGITLVDFKMEFGRYNGEIVVGDEISMDSMRLWDKETGTSLDKDVYRFGKGDVMETYAGVAKRILSPPWGEPA.

The protein belongs to the SAICAR synthetase family.

It carries out the reaction 5-amino-1-(5-phospho-D-ribosyl)imidazole-4-carboxylate + L-aspartate + ATP = (2S)-2-[5-amino-1-(5-phospho-beta-D-ribosyl)imidazole-4-carboxamido]succinate + ADP + phosphate + 2 H(+). Its pathway is purine metabolism; IMP biosynthesis via de novo pathway; 5-amino-1-(5-phospho-D-ribosyl)imidazole-4-carboxamide from 5-amino-1-(5-phospho-D-ribosyl)imidazole-4-carboxylate: step 1/2. In Methanoculleus marisnigri (strain ATCC 35101 / DSM 1498 / JR1), this protein is Phosphoribosylaminoimidazole-succinocarboxamide synthase.